The following is a 337-amino-acid chain: Mitochondrial uncoupling protein 6 (337 aa).

3 Solcar repeats span residues 4–136, 145–236, and 246–331; these read KPFL…LKRR, FPLV…VKEI, and GGIG…VRGL. A run of 6 helical transmembrane segments spans residues 6–26, 105–125, 151–171, 210–230, 252–272, and 304–324; these read FLEGGIAAIIAGALTHPLDLI, PAALFSGVSATILRQMLYSAT, ITAGLIAGAVGSVVGNPADVA, RGSWLTVNRAMIVTASQLATY, VAASFAAGIVAAVASNPIDVV, and YKGLVPTATRQGPFTMILFLT.

The protein belongs to the mitochondrial carrier (TC 2.A.29) family.

It is found in the mitochondrion inner membrane. Functionally, PUMPS are mitochondrial transporter proteins that create proton leaks across the inner mitochondrial membrane, thus uncoupling oxidative phosphorylation. This leads to a decrease in the efficiency of oxidative phosphorylation and an increase in heat production. May be involved in protecting plant cells against oxidative stress damage. Recombinant PUMP6, reconstituted into liposomes, transports a wide range of dicarboxylic acids including malate, oxaloacetate and succinate as well as phosphate, sulfate and thiosulfate. However, it is unknown if these transports are of any biological significance in vivo. The chain is Mitochondrial uncoupling protein 6 (PUMP6) from Arabidopsis thaliana (Mouse-ear cress).